Here is a 69-residue protein sequence, read N- to C-terminus: Light-harvesting protein B-1015 alpha chain (69 aa).

Topologically, residues Ala2–Arg20 are cytoplasmic. The chain crosses the membrane as a helical span at residues Val21–Leu41. His37 lines the a bacteriochlorophyll pocket. Residues Ser42–Ala59 are Periplasmic-facing. A propeptide spanning residues Ser60–Gly69 is cleaved from the precursor.

This sequence belongs to the antenna complex alpha subunit family. As to quaternary structure, the core complex is formed by different alpha and beta chains, binding bacteriochlorophyll molecules, and arranged most probably in tetrameric structures disposed around the reaction center. The non-pigmented gamma chains may constitute additional components.

It localises to the cell inner membrane. Functionally, antenna complexes are light-harvesting systems, which transfer the excitation energy to the reaction centers. The chain is Light-harvesting protein B-1015 alpha chain (pufA) from Blastochloris viridis (Rhodopseudomonas viridis).